The chain runs to 312 residues: MLLVKMTTHIFHADDLLQALQQAKAEKNFSSVFSLDWDKLRTAKRNTTVKYVTVNVIVKGKKAPLMFNFQNEKHVGTIPPSTDEEVIRMNAENPKFLVKKRDRDPCLQFNKYKISPPLEDDGLTVKKNEQGEEIYPGDEEKSKLFQIIELLEEAFEDAVQKGPEAMKTKHVIKLIQRKISNSAVKNADKPLPNPIARIRIKINPATSILTPILLDKNKPITLQNGKTSFEELKDEDGVKANPDNIHKLIESHSMHDGIINARSICISNMGISFPLCLEMGVVKVFEKNNGIDVNSIYGSDDISTLVNQIAIA.

Belongs to the asfivirus CP312R family.

It localises to the virion. This is an uncharacterized protein from African swine fever virus (strain Badajoz 1971 Vero-adapted) (Ba71V).